An 80-amino-acid polypeptide reads, in one-letter code: Large ribosomal subunit protein bL28 (80 aa).

Residues 1–23 are disordered; that stretch reads MARVCQITGKKTRTGNNVSHANN.

The protein belongs to the bacterial ribosomal protein bL28 family.

The chain is Large ribosomal subunit protein bL28 from Cytophaga hutchinsonii (strain ATCC 33406 / DSM 1761 / CIP 103989 / NBRC 15051 / NCIMB 9469 / D465).